The sequence spans 220 residues: Deoxyribose-phosphate aldolase (220 aa).

Asp89 serves as the catalytic Proton donor/acceptor. The Schiff-base intermediate with acetaldehyde role is filled by Lys151. Catalysis depends on Lys180, which acts as the Proton donor/acceptor.

It belongs to the DeoC/FbaB aldolase family. DeoC type 1 subfamily.

Its subcellular location is the cytoplasm. The enzyme catalyses 2-deoxy-D-ribose 5-phosphate = D-glyceraldehyde 3-phosphate + acetaldehyde. It functions in the pathway carbohydrate degradation; 2-deoxy-D-ribose 1-phosphate degradation; D-glyceraldehyde 3-phosphate and acetaldehyde from 2-deoxy-alpha-D-ribose 1-phosphate: step 2/2. Its function is as follows. Catalyzes a reversible aldol reaction between acetaldehyde and D-glyceraldehyde 3-phosphate to generate 2-deoxy-D-ribose 5-phosphate. This Streptococcus pneumoniae (strain 70585) protein is Deoxyribose-phosphate aldolase.